Here is a 190-residue protein sequence, read N- to C-terminus: MAKANEIKRGMAISYNNKLLLVKDIDIQAPSARGASTLYKMRFTDIRTGQKVEERFKGDDILDTINLTRRAVSFSYIDGDEYVFMDNEDYTPYTFKKDQIEEELLFIPEEGLAGMQVLTMDGQVLALELPQTVDMEIIETVPGIKGASASARTKPATLPTGLVIQVPEYLSTGDKIRIHIAERRYMGRAD.

The protein belongs to the elongation factor P family.

The polypeptide is Elongation factor P-like protein (Proteus mirabilis (strain HI4320)).